The following is a 331-amino-acid chain: Bifunctional nuclease (331 aa).

Positions Cys126–Val261 constitute a BFN domain. Positions Glu291–Lys326 constitute a UVR domain.

Belongs to the bifunctional nuclease family.

The protein localises to the nucleus. In terms of biological role, bifunctional nuclease with both RNase and DNase activities. Involved in basal defense response. Participates in abscisic acid-derived callose deposition following infection by a necrotrophic pathogen. In Oryza minuta, this protein is Bifunctional nuclease (BBD).